The primary structure comprises 449 residues: Flavonol 7-O-beta-glucosyltransferase UGT74F1 (449 aa).

Residue His-18 is the Proton acceptor of the active site. His-18 serves as a coordination point for an anthocyanidin. Residue Asp-111 is the Charge relay of the active site. Residues Thr-133, Gln-327, His-342, Trp-345, Asn-346, Ser-347, Glu-350, Asp-366, and Gln-367 each contribute to the UDP-alpha-D-glucose site.

It belongs to the UDP-glycosyltransferase family.

The catalysed reaction is a 7-O-hydroxy-flavonol + UDP-alpha-D-glucose = a flavonol 7-O-beta-D-glucoside + UDP + H(+). Possesses quercetin 7-O-glucosyltransferase and 4'-O-glucosyltransferase activities in vitro. Also active in vitro on benzoates and benzoate derivatives. Has low affinity for the tryptophan precursor anthranilate. Catalyzes the formation of anthranilate glucose ester. Is a minor source of this activity in the plant. The protein is Flavonol 7-O-beta-glucosyltransferase UGT74F1 of Arabidopsis thaliana (Mouse-ear cress).